A 481-amino-acid chain; its full sequence is Cysteine--tRNA ligase (481 aa).

Cys29 is a binding site for Zn(2+). The short motif at 31–41 (PTVYDYSHLGH) is the 'HIGH' region element. 3 residues coordinate Zn(2+): Cys210, His235, and Glu239. The 'KMSKS' region signature appears at 272 to 276 (KMSKS). Position 275 (Lys275) interacts with ATP.

It belongs to the class-I aminoacyl-tRNA synthetase family. Monomer. Zn(2+) serves as cofactor.

It localises to the cytoplasm. The enzyme catalyses tRNA(Cys) + L-cysteine + ATP = L-cysteinyl-tRNA(Cys) + AMP + diphosphate. This chain is Cysteine--tRNA ligase, found in Anaeromyxobacter dehalogenans (strain 2CP-1 / ATCC BAA-258).